A 266-amino-acid polypeptide reads, in one-letter code: GTP cyclohydrolase III (266 aa).

Belongs to the archaeal-type GTP cyclohydrolase family.

It catalyses the reaction GTP + 3 H2O = 2-amino-5-formylamino-6-(5-phospho-D-ribosylamino)pyrimidin-4(3H)-one + 2 phosphate + 2 H(+). Its function is as follows. Catalyzes the formation of 2-amino-5-formylamino-6-ribofuranosylamino-4(3H)-pyrimidinone ribonucleotide monophosphate and inorganic phosphate from GTP. Also has an independent pyrophosphate phosphohydrolase activity. This is GTP cyclohydrolase III from Methanococcus vannielii (strain ATCC 35089 / DSM 1224 / JCM 13029 / OCM 148 / SB).